We begin with the raw amino-acid sequence, 235 residues long: Small ribosomal subunit protein uS3 (235 aa).

In terms of domain architecture, KH type-2 spans 39–107; it reads VRKFLNKELA…PAQINIAEVK (69 aa). Positions 215–235 are disordered; sequence AQSEQQPADKPKKAPRGKGRK.

This sequence belongs to the universal ribosomal protein uS3 family. As to quaternary structure, part of the 30S ribosomal subunit. Forms a tight complex with proteins S10 and S14.

Binds the lower part of the 30S subunit head. Binds mRNA in the 70S ribosome, positioning it for translation. This Haemophilus influenzae (strain ATCC 51907 / DSM 11121 / KW20 / Rd) protein is Small ribosomal subunit protein uS3.